The primary structure comprises 258 residues: Chaperone protein FaeE (258 aa).

A signal peptide spans 1 to 34 (MSKRNAVTTFFTNRVTKALGMTLALMMTCQSAMA). The tract at residues 239 to 258 (KKPAAPEAAKAEKADTAEQK) is disordered. The segment covering 247–258 (AKAEKADTAEQK) has biased composition (basic and acidic residues).

This sequence belongs to the periplasmic pilus chaperone family.

It is found in the periplasm. Its function is as follows. Mediates assembly of pili by forming soluble multimeric complexes with pili subunits as an intermediate step in the assembly process. This protein is involved in K88 pili assembly. Protects pilin protein from proteolytic degradation by DegP and from premature polymerization. This chain is Chaperone protein FaeE (faeE), found in Escherichia coli.